Consider the following 216-residue polypeptide: Somatotropin (216 aa).

The N-terminal stretch at 1 to 26 (MAAGPRTSVLLAFALLCLPWTQEVGA) is a signal peptide. Residue H45 coordinates Zn(2+). C78 and C189 are disulfide-bonded. S131 is modified (phosphoserine). E198 contacts Zn(2+). C206 and C214 are disulfide-bonded.

Belongs to the somatotropin/prolactin family.

Its subcellular location is the secreted. Functionally, plays an important role in growth control. Its major role in stimulating body growth is to stimulate the liver and other tissues to secrete IGF1. It stimulates both the differentiation and proliferation of myoblasts. It also stimulates amino acid uptake and protein synthesis in muscle and other tissues. The polypeptide is Somatotropin (GH1) (Hippopotamus amphibius (Hippopotamus)).